The primary structure comprises 225 residues: Lipoarabinomannan carrier protein LprG (225 aa).

Residues 1-21 form the signal peptide; that stretch reads MRNRIRLALIPVAVAAIALAG. A lipid anchor (N-palmitoyl cysteine) is attached at Cys-22. Cys-22 is lipidated: S-diacylglycerol cysteine.

This sequence belongs to the LppX/LprAFG lipoprotein family. Post-translationally, modified by Lgt on Cys-22 with an S-linked diacylglyceral, signal peptide is removed by LspA, Cys-22 is further modifed with a fatty acid on its amino group by Lnt yielding a triacylated protein.

Its subcellular location is the cell inner membrane. Helps membrane protein MAB_2807 (P55) transport triacylglycerides (TAG) across the inner cell membrane into the periplasm and probably ultimately to the outer membrane. Binds TAG in its hydrophobic cavity and transfers it between lipid bilayers. TAG probably regulates lipid metabolism and growth regulation and plays a structural role in the outer membrane. Also binds mannosides, lipoarabinomannan and lipomannan and various glycolipids in the same cavity. This is Lipoarabinomannan carrier protein LprG from Mycobacteroides abscessus (strain ATCC 19977 / DSM 44196 / CCUG 20993 / CIP 104536 / JCM 13569 / NCTC 13031 / TMC 1543 / L948) (Mycobacterium abscessus).